Here is a 1297-residue protein sequence, read N- to C-terminus: Phosphoribosylformylglycinamidine synthase (1297 aa).

ATP is bound by residues 307–318 (GASTGSGGEIRD) and alanine 678. Mg(2+)-binding residues include glutamate 718, asparagine 722, and aspartate 886. The 254-residue stretch at 1044–1297 (MAILREQGVN…MFQNARKYFG (254 aa)) folds into the Glutamine amidotransferase type-1 domain. The Nucleophile role is filled by cysteine 1137. Active-site residues include histidine 1262 and glutamate 1264.

The protein in the N-terminal section; belongs to the FGAMS family. In terms of assembly, monomer.

The protein localises to the cytoplasm. It carries out the reaction N(2)-formyl-N(1)-(5-phospho-beta-D-ribosyl)glycinamide + L-glutamine + ATP + H2O = 2-formamido-N(1)-(5-O-phospho-beta-D-ribosyl)acetamidine + L-glutamate + ADP + phosphate + H(+). It participates in purine metabolism; IMP biosynthesis via de novo pathway; 5-amino-1-(5-phospho-D-ribosyl)imidazole from N(2)-formyl-N(1)-(5-phospho-D-ribosyl)glycinamide: step 1/2. Phosphoribosylformylglycinamidine synthase involved in the purines biosynthetic pathway. Catalyzes the ATP-dependent conversion of formylglycinamide ribonucleotide (FGAR) and glutamine to yield formylglycinamidine ribonucleotide (FGAM) and glutamate. This Vibrio cholerae serotype O1 (strain ATCC 39315 / El Tor Inaba N16961) protein is Phosphoribosylformylglycinamidine synthase.